A 543-amino-acid polypeptide reads, in one-letter code: Probable protein kinase UbiB (543 aa).

Residues 123–501 (DFDQQALASA…RVRQGQSRYL (379 aa)) enclose the Protein kinase domain. Residues 129–137 (LASASIAQV) and lysine 152 each bind ATP. The Proton acceptor role is filled by aspartate 287. A run of 2 helical transmembrane segments spans residues 498–518 (SRYL…LLSG) and 519–539 (DVEV…VIGW).

The protein belongs to the ABC1 family. UbiB subfamily.

The protein localises to the cell inner membrane. It participates in cofactor biosynthesis; ubiquinone biosynthesis [regulation]. In terms of biological role, is probably a protein kinase regulator of UbiI activity which is involved in aerobic coenzyme Q (ubiquinone) biosynthesis. The chain is Probable protein kinase UbiB from Serratia proteamaculans (strain 568).